The sequence spans 311 residues: Aspartate carbamoyltransferase catalytic subunit (311 aa).

2 residues coordinate carbamoyl phosphate: Arg57 and Thr58. Position 86 (Lys86) interacts with L-aspartate. Residues Arg107, His135, and Gln138 each coordinate carbamoyl phosphate. L-aspartate-binding residues include Arg168 and Arg230. 2 residues coordinate carbamoyl phosphate: Leu269 and Pro270.

This sequence belongs to the aspartate/ornithine carbamoyltransferase superfamily. ATCase family. As to quaternary structure, heterooligomer of catalytic and regulatory chains.

The enzyme catalyses carbamoyl phosphate + L-aspartate = N-carbamoyl-L-aspartate + phosphate + H(+). It participates in pyrimidine metabolism; UMP biosynthesis via de novo pathway; (S)-dihydroorotate from bicarbonate: step 2/3. Its function is as follows. Catalyzes the condensation of carbamoyl phosphate and aspartate to form carbamoyl aspartate and inorganic phosphate, the committed step in the de novo pyrimidine nucleotide biosynthesis pathway. The chain is Aspartate carbamoyltransferase catalytic subunit from Staphylothermus marinus (strain ATCC 43588 / DSM 3639 / JCM 9404 / F1).